The following is a 407-amino-acid chain: S-adenosylmethionine synthase (407 aa).

His21 is a binding site for ATP. A Mg(2+)-binding site is contributed by Asp23. Glu49 lines the K(+) pocket. L-methionine-binding residues include Glu62 and Gln105. The interval 105 to 115 (QSQEIGAGVDA) is flexible loop. Residues 179 to 181 (DGK), Asp259, 265 to 266 (RK), Ala282, and Lys286 each bind ATP. An L-methionine-binding site is contributed by Asp259. Residue Lys290 participates in L-methionine binding.

Belongs to the AdoMet synthase family. In terms of assembly, homotetramer; dimer of dimers. The cofactor is Mg(2+). It depends on K(+) as a cofactor.

The protein localises to the cytoplasm. The enzyme catalyses L-methionine + ATP + H2O = S-adenosyl-L-methionine + phosphate + diphosphate. It participates in amino-acid biosynthesis; S-adenosyl-L-methionine biosynthesis; S-adenosyl-L-methionine from L-methionine: step 1/1. Functionally, catalyzes the formation of S-adenosylmethionine (AdoMet) from methionine and ATP. The overall synthetic reaction is composed of two sequential steps, AdoMet formation and the subsequent tripolyphosphate hydrolysis which occurs prior to release of AdoMet from the enzyme. The chain is S-adenosylmethionine synthase from Corynebacterium aurimucosum (strain ATCC 700975 / DSM 44827 / CIP 107346 / CN-1) (Corynebacterium nigricans).